The following is a 1512-amino-acid chain: Zinc finger protein 608 (1512 aa).

Disordered regions lie at residues 1–23 (MSVN…YDSG), 46–74 (QKFE…SGAG), 89–237 (QASA…HLYG), 260–295 (VAAA…HRRI), and 417–545 (RFCE…FLDQ). Low complexity-rich tracts occupy residues 51–74 (NNST…SGAG) and 151–185 (SALG…GSCG). Basic and acidic residues predominate over residues 201 to 218 (AKRDKDAGKSRKDKHDLL). Residues 220 to 230 (GHQNGSGSQAP) are compositionally biased toward polar residues. Low complexity predominate over residues 260-270 (VAAAGEVSKSA). A coiled-coil region spans residues 278–304 (NSMLVKKEEEEEESHRRIKKLKTEKVD). K283 participates in a covalent cross-link: Glycyl lysine isopeptide (Lys-Gly) (interchain with G-Cter in SUMO2). S421 and S424 each carry phosphoserine. Over residues 449-458 (ASFTESRGLQ) the composition is skewed to polar residues. A Phosphothreonine modification is found at T481. At S493 the chain carries Phosphoserine. A compositionally biased stretch (polar residues) spans 526–535 (NSRSTPTTPQ). The C2H2-type zinc-finger motif lies at 553-578 (IDCPHPNCNKKYKHINGLRYHQAHAH). Disordered regions lie at residues 622–665 (LKAP…KKKG), 713–750 (DKEK…PQLI), and 777–858 (QATP…KDHL). S627 is subject to Phosphoserine. Positions 713 to 729 (DKEKGKKATNCKTDKNL) are enriched in basic and acidic residues. A compositionally biased stretch (pro residues) spans 781–790 (KSPPLKPIQP). A Phosphoserine modification is found at S782. Over residues 818-858 (KLKDKEGKETGSPKMDAKLGKLEDSKGASKDLPGHFLKDHL) the composition is skewed to basic and acidic residues. K880 is covalently cross-linked (Glycyl lysine isopeptide (Lys-Gly) (interchain with G-Cter in SUMO2)). S895 carries the phosphoserine modification. Residues 925–934 (NGAESSAAKT) show a composition bias toward polar residues. Disordered stretches follow at residues 925–996 (NGAE…HSPY) and 1011–1066 (PGQV…HQSV). Over residues 960–973 (SKASSPSDIISSKD) the composition is skewed to low complexity. A Phosphoserine modification is found at S964. The segment covering 979–989 (HSSTTAQSSQL) has biased composition (polar residues). The segment covering 1030–1054 (IKKESEEDAEKKDKAEQLDSKKVDH) has biased composition (basic and acidic residues). Positions 1055-1066 (NSASLQPQHQSV) are enriched in polar residues. The residue at position 1098 (S1098) is a Phosphoserine. Positions 1117–1192 (QKMAQTGRGD…SQLLSNHQQQ (76 aa)) are disordered. K1118 is covalently cross-linked (Glycyl lysine isopeptide (Lys-Gly) (interchain with G-Cter in SUMO2)). The span at 1125-1145 (GDCERKSELPLKELGKEETKQ) shows a compositional bias: basic and acidic residues. The span at 1146 to 1157 (KNMPSATISKAP) shows a compositional bias: polar residues. Glycyl lysine isopeptide (Lys-Gly) (interchain with G-Cter in SUMO2) cross-links involve residues K1176 and K1182. Low complexity predominate over residues 1183-1192 (SQLLSNHQQQ). Residues K1199, K1216, K1234, and K1250 each participate in a glycyl lysine isopeptide (Lys-Gly) (interchain with G-Cter in SUMO2) cross-link. Residues 1220 to 1335 (DSMKQTGVDP…RGTRVAVSSP (116 aa)) form a disordered region. A compositionally biased stretch (basic and acidic residues) spans 1231-1241 (SRFKQDPDSRT). Composition is skewed to basic and acidic residues over residues 1253 to 1276 (DQQK…KTPN) and 1291 to 1327 (IKEE…DSRG). Glycyl lysine isopeptide (Lys-Gly) (interchain with G-Cter in SUMO2) cross-links involve residues K1292, K1310, and K1414. The interval 1423–1459 (ANQYRSKSPAPVEKATAEREREAERERDRHSPFGQRH) is disordered. A compositionally biased stretch (basic and acidic residues) spans 1437 to 1453 (ATAEREREAERERDRHS).

In terms of biological role, transcription factor, which represses ZNF609 transcription. In Homo sapiens (Human), this protein is Zinc finger protein 608 (ZNF608).